A 146-amino-acid polypeptide reads, in one-letter code: Ribosomal RNA large subunit methyltransferase H (146 aa).

Residues leucine 60, glycine 93, and 112-117 (MGKMTL) contribute to the S-adenosyl-L-methionine site.

This sequence belongs to the RNA methyltransferase RlmH family. Homodimer.

It is found in the cytoplasm. The catalysed reaction is pseudouridine(1915) in 23S rRNA + S-adenosyl-L-methionine = N(3)-methylpseudouridine(1915) in 23S rRNA + S-adenosyl-L-homocysteine + H(+). Its function is as follows. Specifically methylates the pseudouridine at position 1915 (m3Psi1915) in 23S rRNA. The polypeptide is Ribosomal RNA large subunit methyltransferase H (Koribacter versatilis (strain Ellin345)).